The primary structure comprises 46 residues: MTPQGNKPSCHDVITNAWRPTATDSAAGRAPGYGVITNIINGGLDC.

Belongs to the glycosyl hydrolase 19 family. Chitinase class I subfamily.

It carries out the reaction Random endo-hydrolysis of N-acetyl-beta-D-glucosaminide (1-&gt;4)-beta-linkages in chitin and chitodextrins.. In terms of biological role, defense against chitin-containing fungal and bacterial pathogens. The chain is Endochitinase 4 from Arachis hypogaea (Peanut).